Consider the following 553-residue polypeptide: Cytochrome P450 monooxygenase alnD (553 aa).

The helical transmembrane segment at 351 to 371 threads the bilayer; that stretch reads LVGAGFVTSSAFLSWLIYSLV. A heme-binding site is contributed by C493. A glycan (N-linked (GlcNAc...) asparagine) is linked at N518.

This sequence belongs to the cytochrome P450 family. Requires heme as cofactor.

The protein localises to the membrane. It functions in the pathway polyketide biosynthesis. Functionally, cytochrome P450 monooxygenase; part of the gene cluster that mediates the biosynthesis of asperlin, a polyketide showing anti-inflammatory, antitumor and antibiotic activities. The first step of the asperlin biosynthesis is the production of the intermediate 2,4,6-octatrienoic acid by the highly redusing polyketide synthase alnA with cleavage of the PKS product by the esterase alnB. 2,4,6-octatrienoic acid is further converted to asperlin via several steps involving the remaining enzymes from the cluster. The polypeptide is Cytochrome P450 monooxygenase alnD (Emericella nidulans (strain FGSC A4 / ATCC 38163 / CBS 112.46 / NRRL 194 / M139) (Aspergillus nidulans)).